A 125-amino-acid polypeptide reads, in one-letter code: Fluoride-specific ion channel FluC (125 aa).

A run of 3 helical transmembrane segments spans residues 36 to 56, 65 to 85, and 99 to 119; these read GTIFVNVVGSFLLSFLMFLSI, FILFFGTGFLGAFTTFSTFAY, and IIYFIANIFLGFFAAILGMFL. Na(+) contacts are provided by Gly75 and Thr78.

This sequence belongs to the fluoride channel Fluc/FEX (TC 1.A.43) family.

Its subcellular location is the cell inner membrane. It carries out the reaction fluoride(in) = fluoride(out). Its activity is regulated as follows. Na(+) is not transported, but it plays an essential structural role and its presence is essential for fluoride channel function. Its function is as follows. Fluoride-specific ion channel. Important for reducing fluoride concentration in the cell, thus reducing its toxicity. This is Fluoride-specific ion channel FluC from Thermosipho africanus (strain TCF52B).